Here is a 55-residue protein sequence, read N- to C-terminus: Riparin-1.5 acid (55 aa).

The signal sequence occupies residues 1 to 15 (MKIIVFLAVLMLVSA). Residues 16–41 (QVCLVSAAEMEHSSDNELSSRDLVKR) constitute a propeptide that is removed on maturation. Cys47 and Cys53 form a disulfide bridge. Residues 54–55 (NH) constitute a propeptide that is removed on maturation.

As to expression, expressed by the skin glands.

The protein localises to the secreted. This is Riparin-1.5 acid from Crinia riparia (Streambank froglet).